A 305-amino-acid chain; its full sequence is Porphobilinogen deaminase (305 aa).

C239 carries the post-translational modification S-(dipyrrolylmethanemethyl)cysteine.

This sequence belongs to the HMBS family. As to quaternary structure, monomer. The cofactor is dipyrromethane.

The catalysed reaction is 4 porphobilinogen + H2O = hydroxymethylbilane + 4 NH4(+). It functions in the pathway porphyrin-containing compound metabolism; protoporphyrin-IX biosynthesis; coproporphyrinogen-III from 5-aminolevulinate: step 2/4. Its function is as follows. Tetrapolymerization of the monopyrrole PBG into the hydroxymethylbilane pre-uroporphyrinogen in several discrete steps. The protein is Porphobilinogen deaminase of Dichelobacter nodosus (strain VCS1703A).